We begin with the raw amino-acid sequence, 346 residues long: Histidinol-phosphate aminotransferase (346 aa).

At Lys-209 the chain carries N6-(pyridoxal phosphate)lysine.

Belongs to the class-II pyridoxal-phosphate-dependent aminotransferase family. Histidinol-phosphate aminotransferase subfamily. Homodimer. Requires pyridoxal 5'-phosphate as cofactor.

The catalysed reaction is L-histidinol phosphate + 2-oxoglutarate = 3-(imidazol-4-yl)-2-oxopropyl phosphate + L-glutamate. The protein operates within amino-acid biosynthesis; L-histidine biosynthesis; L-histidine from 5-phospho-alpha-D-ribose 1-diphosphate: step 7/9. The sequence is that of Histidinol-phosphate aminotransferase from Aliivibrio fischeri (strain ATCC 700601 / ES114) (Vibrio fischeri).